Reading from the N-terminus, the 86-residue chain is uncharacterized protein (86 aa).

The disordered stretch occupies residues 1–21; sequence MLSNSTSRNRHSKHNKKNTRE. Positions 8–17 are enriched in basic residues; sequence RNRHSKHNKK.

This is an uncharacterized protein from Acidianus convivator (ATV).